Here is a 183-residue protein sequence, read N- to C-terminus: Small ribosomal subunit protein uS4 (183 aa).

The 63-residue stretch at 106 to 168 folds into the S4 RNA-binding domain; that stretch reads RRLETLVYKK…ETSPFTDENH (63 aa). A disordered region spans residues 158-183; the sequence is NETSPFTDENHPLRMEMSGTKEEENE. Residues 165–183 are compositionally biased toward basic and acidic residues; the sequence is DENHPLRMEMSGTKEEENE.

This sequence belongs to the universal ribosomal protein uS4 family. As to quaternary structure, part of the 30S ribosomal subunit. Contacts protein S5. The interaction surface between S4 and S5 is involved in control of translational fidelity.

Functionally, one of the primary rRNA binding proteins, it binds directly to 16S rRNA where it nucleates assembly of the body of the 30S subunit. With S5 and S12 plays an important role in translational accuracy. The chain is Small ribosomal subunit protein uS4 from Picrophilus torridus (strain ATCC 700027 / DSM 9790 / JCM 10055 / NBRC 100828 / KAW 2/3).